We begin with the raw amino-acid sequence, 504 residues long: Maturase K (504 aa).

Belongs to the intron maturase 2 family. MatK subfamily.

It localises to the plastid. The protein resides in the chloroplast. Its function is as follows. Usually encoded in the trnK tRNA gene intron. Probably assists in splicing its own and other chloroplast group II introns. This Pseudoturritis turrita (Tower rock-cress) protein is Maturase K.